The sequence spans 488 residues: Wax ester synthase/diacylglycerol acyltransferase 8 (488 aa).

The Cytoplasmic segment spans residues Met1–Arg195. The active-site Proton acceptor is His135. The chain crosses the membrane as a helical span at residues Leu196–Leu214. Residues Lys215 to Val488 are Lumenal-facing. 4 N-linked (GlcNAc...) asparagine glycosylation sites follow: Asn238, Asn252, Asn353, and Asn397.

In the N-terminal section; belongs to the long-chain O-acyltransferase family. Mostly expressed in flowers and siliques and at low levels in stems.

The protein resides in the cell membrane. It is found in the endoplasmic reticulum membrane. The enzyme catalyses an acyl-CoA + a 1,2-diacyl-sn-glycerol = a triacyl-sn-glycerol + CoA. It catalyses the reaction a long chain fatty alcohol + a fatty acyl-CoA = a wax ester + CoA. The protein operates within glycerolipid metabolism; triacylglycerol biosynthesis. It functions in the pathway lipid metabolism. Its function is as follows. Bifunctional wax ester synthase/diacylglycerol acyltransferase. Involved in cuticular wax biosynthesis. The polypeptide is Wax ester synthase/diacylglycerol acyltransferase 8 (Arabidopsis thaliana (Mouse-ear cress)).